Here is a 93-residue protein sequence, read N- to C-terminus: Protein S100-A5 (93 aa).

EF-hand domains lie at 12–47 and 48–83; these read MVTT…LAEK and MKES…LCMA. 7 residues coordinate Ca(2+): Thr28, Glu33, Asp61, Asn63, Asp65, Glu67, and Glu72.

Belongs to the S-100 family. As to quaternary structure, homodimer.

Binds calcium, zinc and copper. One subunit can simultaneously bind 2 calcium ions or 2 copper ions plus 1 zinc ion. Calcium and copper ions compete for the same binding sites. The protein is Protein S100-A5 (S100a5) of Mus musculus (Mouse).